The primary structure comprises 194 residues: GTP cyclohydrolase 1 (194 aa).

3 residues coordinate Zn(2+): Cys-83, His-86, and Cys-155.

The protein belongs to the GTP cyclohydrolase I family. Toroid-shaped homodecamer, composed of two pentamers of five dimers.

It catalyses the reaction GTP + H2O = 7,8-dihydroneopterin 3'-triphosphate + formate + H(+). Its pathway is cofactor biosynthesis; 7,8-dihydroneopterin triphosphate biosynthesis; 7,8-dihydroneopterin triphosphate from GTP: step 1/1. The protein is GTP cyclohydrolase 1 (folE) of Streptococcus pyogenes.